The primary structure comprises 203 residues: Na(+)-translocating NADH-quinone reductase subunit E (203 aa).

A run of 6 helical transmembrane segments spans residues 11-31, 35-55, 82-102, 115-135, 145-165, and 181-201; these read SIFIENMALSFFLGMCTFLAV, ISTAIGLGTAVIVVQTLTVPL, FLGLIAYIGVIAAVVQILEMF, GIFLPLITVNCAILAGSLFMV, MVYGVGSGVGWALAIAVMAGV, and LGITFITAGLMAIGFMSFSGI.

The protein belongs to the NqrDE/RnfAE family. Composed of six subunits; NqrA, NqrB, NqrC, NqrD, NqrE and NqrF.

The protein localises to the cell inner membrane. The catalysed reaction is a ubiquinone + n Na(+)(in) + NADH + H(+) = a ubiquinol + n Na(+)(out) + NAD(+). NQR complex catalyzes the reduction of ubiquinone-1 to ubiquinol by two successive reactions, coupled with the transport of Na(+) ions from the cytoplasm to the periplasm. NqrA to NqrE are probably involved in the second step, the conversion of ubisemiquinone to ubiquinol. The polypeptide is Na(+)-translocating NADH-quinone reductase subunit E (Dichelobacter nodosus (strain VCS1703A)).